The following is a 558-amino-acid chain: Formate--tetrahydrofolate ligase (558 aa).

ATP is bound at residue 66–73; sequence TPAGEGKT.

This sequence belongs to the formate--tetrahydrofolate ligase family.

It carries out the reaction (6S)-5,6,7,8-tetrahydrofolate + formate + ATP = (6R)-10-formyltetrahydrofolate + ADP + phosphate. It participates in one-carbon metabolism; tetrahydrofolate interconversion. The polypeptide is Formate--tetrahydrofolate ligase (Neisseria meningitidis serogroup A / serotype 4A (strain DSM 15465 / Z2491)).